The chain runs to 247 residues: ATP synthase subunit a, chloroplastic (247 aa).

5 consecutive transmembrane segments (helical) span residues 38-58 (QVLI…IIAV), 95-115 (VPFI…GALL), 133-153 (DINT…YAGL), 199-219 (LVVV…VMFL), and 220-240 (GLFT…AYIG).

It belongs to the ATPase A chain family. As to quaternary structure, F-type ATPases have 2 components, CF(1) - the catalytic core - and CF(0) - the membrane proton channel. CF(1) has five subunits: alpha(3), beta(3), gamma(1), delta(1), epsilon(1). CF(0) has four main subunits: a, b, b' and c.

The protein resides in the plastid. Its subcellular location is the chloroplast thylakoid membrane. Its function is as follows. Key component of the proton channel; it plays a direct role in the translocation of protons across the membrane. This chain is ATP synthase subunit a, chloroplastic, found in Phalaenopsis aphrodite subsp. formosana (Moth orchid).